The sequence spans 340 residues: Glutaminase 2 (340 aa).

5 residues coordinate substrate: Ser-89, Asn-140, Asn-191, Tyr-215, and Tyr-267.

Belongs to the glutaminase family. Homotetramer.

The enzyme catalyses L-glutamine + H2O = L-glutamate + NH4(+). This is Glutaminase 2 from Yersinia pestis.